The chain runs to 120 residues: Large ribosomal subunit protein uL18 (120 aa).

This sequence belongs to the universal ribosomal protein uL18 family. Part of the 50S ribosomal subunit; part of the 5S rRNA/L5/L18/L25 subcomplex. Contacts the 5S and 23S rRNAs.

In terms of biological role, this is one of the proteins that bind and probably mediate the attachment of the 5S RNA into the large ribosomal subunit, where it forms part of the central protuberance. The sequence is that of Large ribosomal subunit protein uL18 from Rhizobium etli (strain CIAT 652).